A 260-amino-acid polypeptide reads, in one-letter code: Snake venom serine protease homolog 1 (260 aa).

The N-terminal stretch at 1 to 18 (MVLIRVLANLLLLQLSYA) is a signal peptide. Residues 19–24 (QESSEL) constitute a propeptide that is removed on maturation. The Peptidase S1 domain maps to 25-251 (VIGGDECDIN…YTDWIEGIIA (227 aa)). 6 disulfides stabilise this stretch: C31/C165, C52/C68, C100/C258, C144/C212, C176/C191, and C202/C227. The N-linked (GlcNAc...) asparagine glycan is linked to N253.

It belongs to the peptidase S1 family. Snake venom subfamily. As to expression, expressed by the venom gland.

Its subcellular location is the secreted. Its function is as follows. Snake venom serine protease homolog that may act in the hemostasis system of the prey. This chain is Snake venom serine protease homolog 1, found in Bitis gabonica (Gaboon adder).